A 141-amino-acid chain; its full sequence is MLTADDKKLIQATWDKVQGHQEDFGAEALQRMFITYPPTKTYFPHFDLSPGSDQVRGHGKKVVNALGNAVKSMDNLSQALSELSNLHAYNLRVDPVNFKLLSQCFQVVLAVHLGKEYTPEVHAAFDKFLSAVAAVLAEKYR.

The 141-residue stretch at Met-1–Arg-141 folds into the Globin domain. Heme b contacts are provided by His-58 and His-87.

The protein belongs to the globin family. In terms of assembly, heterotetramer of two alpha-D chains and two beta chains. As to expression, red blood cells.

Its function is as follows. Involved in oxygen transport from the lung to the various peripheral tissues. The polypeptide is Hemoglobin subunit alpha-D (HBAD) (Aegypius monachus (Cinereous vulture)).